A 414-amino-acid polypeptide reads, in one-letter code: 2,3-diketo-5-methylthiopentyl-1-phosphate enolase (414 aa).

K99 acts as the Proton acceptor in catalysis. Substrate-binding positions include K148, 174–177 (KDDE), H265, G338, and 360–361 (GG). Mg(2+) contacts are provided by K174, D176, and E177. K174 carries the N6-carboxylysine modification.

Belongs to the RuBisCO large chain family. Type IV subfamily. As to quaternary structure, homodimer. Mg(2+) serves as cofactor.

The enzyme catalyses 5-methylsulfanyl-2,3-dioxopentyl phosphate = 2-hydroxy-5-methylsulfanyl-3-oxopent-1-enyl phosphate. It participates in amino-acid biosynthesis; L-methionine biosynthesis via salvage pathway; L-methionine from S-methyl-5-thio-alpha-D-ribose 1-phosphate: step 3/6. Functionally, catalyzes the enolization of 2,3-diketo-5-methylthiopentyl-1-phosphate (DK-MTP-1-P) into 2-hydroxy-3-keto-5-methylthiopentenyl-1-phosphate (HK-MTPenyl-1-P). In Bacillus thuringiensis (strain Al Hakam), this protein is 2,3-diketo-5-methylthiopentyl-1-phosphate enolase.